Reading from the N-terminus, the 236-residue chain is 2-C-methyl-D-erythritol 4-phosphate cytidylyltransferase (236 aa).

Belongs to the IspD/TarI cytidylyltransferase family. IspD subfamily. In terms of assembly, homodimer.

The enzyme catalyses 2-C-methyl-D-erythritol 4-phosphate + CTP + H(+) = 4-CDP-2-C-methyl-D-erythritol + diphosphate. Its pathway is isoprenoid biosynthesis; isopentenyl diphosphate biosynthesis via DXP pathway; isopentenyl diphosphate from 1-deoxy-D-xylulose 5-phosphate: step 2/6. Functionally, catalyzes the formation of 4-diphosphocytidyl-2-C-methyl-D-erythritol from CTP and 2-C-methyl-D-erythritol 4-phosphate (MEP). The polypeptide is 2-C-methyl-D-erythritol 4-phosphate cytidylyltransferase (Salmonella schwarzengrund (strain CVM19633)).